We begin with the raw amino-acid sequence, 533 residues long: Dipeptide-binding protein (533 aa).

A signal peptide spans 1–24; the sequence is MRKILPLRAWLAAGLILGSPFSHA.

This sequence belongs to the bacterial solute-binding protein 5 family.

It localises to the periplasm. In terms of biological role, binds different dipeptides. Probably bind only L-amino acid containing dipeptides. In Pseudomonas aeruginosa (strain ATCC 15692 / DSM 22644 / CIP 104116 / JCM 14847 / LMG 12228 / 1C / PRS 101 / PAO1), this protein is Dipeptide-binding protein.